The primary structure comprises 832 residues: Protein wech (832 aa).

A compositionally biased stretch (polar residues) spans 1 to 14; sequence MMELLSNNSVPQQM. The disordered stretch occupies residues 1–42; that stretch reads MMELLSNNSVPQQMASSNAPSANNVAHSSTANGSGGGSVSSN. Over residues 15 to 32 the composition is skewed to low complexity; it reads ASSNAPSANNVAHSSTAN. S107 carries the phosphoserine modification. 2 consecutive B box-type zinc fingers follow at residues 118–163 and 184–224; these read NSSI…IVSL and SGNF…YASI. Residues C123, C126, C145, H149, C189, H192, C211, and H216 each contribute to the Zn(2+) site. Phosphoserine is present on residues S470, S475, and S506. 5 NHL repeats span residues 537–580, 584–627, 631–674, 680–722, and 727–770; these read SLSF…FNPD, KFKF…FTAS, LLKF…FDSE, QIVF…IDPD, and LSVK…FNQN.

In terms of assembly, interacts with the head domain of rhea and the kinase domain of Ilk. Interacts with AGO1. Interacts with mei-P26. In terms of tissue distribution, expressed in ovarian germline stem cells (at protein level). Expressed ubiquitously in all epithelial cells during early stages of embryogenesis. Specifically expressed at epidermal muscle attachment site.

Functionally, vital for larval development. Plays a role in tumor formation. A crucial component for the physical link between integrins and the cytoskeleton in the epidermal muscle attachment sites. In Drosophila melanogaster (Fruit fly), this protein is Protein wech (wech).